A 142-amino-acid polypeptide reads, in one-letter code: Hemoglobin subunit alpha-4 (142 aa).

Ser1 carries the N-acetylserine modification. In terms of domain architecture, Globin spans Ser1 to Arg142. Position 59 (His59) interacts with O2. Heme b is bound at residue His88.

This sequence belongs to the globin family. Heterotetramer of two alpha chains and two beta chains. In terms of tissue distribution, red blood cells.

Its function is as follows. Involved in oxygen transport from gills to the various peripheral tissues. The polypeptide is Hemoglobin subunit alpha-4 (hba4) (Oncorhynchus mykiss (Rainbow trout)).